We begin with the raw amino-acid sequence, 173 residues long: MSNLYESIRKYKCGYIEEILNILDMFDPLLNKFQRNSCYEDMKSELSLFMFNLIDNFPLEKDCFKEDKFIINYIYKALKNKFIQVNKLHQKIKSCESNIDIVALNNCDYSNLLSFVIFEDIIKDLTQNEKNIIRKIYLDRLRESEISRELNISRQAVNKTHLRALEKLKKLIN.

The sigma-70 factor domain-4 stretch occupies residues 122–169 (IKDLTQNEKNIIRKIYLDRLRESEISRELNISRQAVNKTHLRALEKLK). Residues 143–162 (ESEISRELNISRQAVNKTHL) constitute a DNA-binding region (H-T-H motif).

The protein belongs to the sigma-70 factor family.

In terms of biological role, sigma factors are initiation factors that promote the attachment of RNA polymerase to specific initiation sites and are then released. Transcriptional regulator specifically required to activate expression of the toxin gene locus, composed of tcsL, tcsH and tcdE/utxA. This Paraclostridium sordellii (Clostridium sordellii) protein is RNA polymerase sigma factor TcsR.